The following is a 938-amino-acid chain: Mediator of RNA polymerase II transcription subunit 16 (938 aa).

Belongs to the Mediator complex subunit 16 family. As to quaternary structure, component of the Mediator complex.

Its subcellular location is the nucleus. In terms of biological role, component of the Mediator complex, a coactivator involved in the regulated transcription of nearly all RNA polymerase II-dependent genes. Mediator functions as a bridge to convey information from gene-specific regulatory proteins to the basal RNA polymerase II transcription machinery. Mediator is recruited to promoters by direct interactions with regulatory proteins and serves as a scaffold for the assembly of a functional preinitiation complex with RNA polymerase II and the general transcription factors. This Eremothecium gossypii (strain ATCC 10895 / CBS 109.51 / FGSC 9923 / NRRL Y-1056) (Yeast) protein is Mediator of RNA polymerase II transcription subunit 16 (SIN4).